A 160-amino-acid chain; its full sequence is 2-amino-4-hydroxy-6-hydroxymethyldihydropteridine pyrophosphokinase (160 aa).

This sequence belongs to the HPPK family.

It carries out the reaction 6-hydroxymethyl-7,8-dihydropterin + ATP = (7,8-dihydropterin-6-yl)methyl diphosphate + AMP + H(+). The protein operates within cofactor biosynthesis; tetrahydrofolate biosynthesis; 2-amino-4-hydroxy-6-hydroxymethyl-7,8-dihydropteridine diphosphate from 7,8-dihydroneopterin triphosphate: step 4/4. Functionally, catalyzes the transfer of pyrophosphate from adenosine triphosphate (ATP) to 6-hydroxymethyl-7,8-dihydropterin, an enzymatic step in folate biosynthesis pathway. This is 2-amino-4-hydroxy-6-hydroxymethyldihydropteridine pyrophosphokinase (folK) from Aquifex aeolicus (strain VF5).